Consider the following 156-residue polypeptide: S-ribosylhomocysteine lyase (156 aa).

Residues His56, His60, and Cys123 each coordinate Fe cation.

This sequence belongs to the LuxS family. In terms of assembly, homodimer. Requires Fe cation as cofactor.

The catalysed reaction is S-(5-deoxy-D-ribos-5-yl)-L-homocysteine = (S)-4,5-dihydroxypentane-2,3-dione + L-homocysteine. Its function is as follows. Involved in the synthesis of autoinducer 2 (AI-2) which is secreted by bacteria and is used to communicate both the cell density and the metabolic potential of the environment. The regulation of gene expression in response to changes in cell density is called quorum sensing. Catalyzes the transformation of S-ribosylhomocysteine (RHC) to homocysteine (HC) and 4,5-dihydroxy-2,3-pentadione (DPD). This chain is S-ribosylhomocysteine lyase, found in Staphylococcus saprophyticus subsp. saprophyticus (strain ATCC 15305 / DSM 20229 / NCIMB 8711 / NCTC 7292 / S-41).